We begin with the raw amino-acid sequence, 242 residues long: Endoglucanase-5 (242 aa).

Positions 1–17 (MKATLVLGSLIVGAVSA) are cleaved as a signal peptide. Residues 18-182 (YKATTTRYYD…ETDPTPVLGN (165 aa)) are catalytic. Catalysis depends on Asp-27, which acts as the Nucleophile. Catalysis depends on Asp-134, which acts as the Proton donor. The segment at 177 to 206 (TPVLGNDTGSTPPGSSPPATSSSPPSGGGQ) is disordered. Residue Asn-182 is glycosylated (N-linked (GlcNAc...) asparagine). Residues 184 to 201 (TGSTPPGSSPPATSSSPP) are compositionally biased toward low complexity. The 37-residue stretch at 205–241 (GQQTLYGQCGGAGWTGPTTCQAPGTCKVQNQWYSQCL) folds into the CBM1 domain. Cystine bridges form between Cys-213–Cys-230 and Cys-224–Cys-240.

The protein belongs to the glycosyl hydrolase 45 (cellulase K) family.

It carries out the reaction Endohydrolysis of (1-&gt;4)-beta-D-glucosidic linkages in cellulose, lichenin and cereal beta-D-glucans.. This Hypocrea jecorina (Trichoderma reesei) protein is Endoglucanase-5 (egl5).